A 102-amino-acid polypeptide reads, in one-letter code: NADH-quinone oxidoreductase subunit K (102 aa).

The next 3 membrane-spanning stretches (helical) occupy residues 5 to 25, 31 to 51, and 65 to 85; these read LSHY…GIFL, IVIL…MVAF, and LFIL…LVVF.

This sequence belongs to the complex I subunit 4L family. NDH-1 is composed of 14 different subunits. Subunits NuoA, H, J, K, L, M, N constitute the membrane sector of the complex.

The protein resides in the cell inner membrane. It carries out the reaction a quinone + NADH + 5 H(+)(in) = a quinol + NAD(+) + 4 H(+)(out). Functionally, NDH-1 shuttles electrons from NADH, via FMN and iron-sulfur (Fe-S) centers, to quinones in the respiratory chain. The immediate electron acceptor for the enzyme in this species is believed to be ubiquinone. Couples the redox reaction to proton translocation (for every two electrons transferred, four hydrogen ions are translocated across the cytoplasmic membrane), and thus conserves the redox energy in a proton gradient. The chain is NADH-quinone oxidoreductase subunit K from Rhizobium johnstonii (strain DSM 114642 / LMG 32736 / 3841) (Rhizobium leguminosarum bv. viciae).